Consider the following 411-residue polypeptide: MEAETSWTNYPYSYITYVPEAESYREQSDDEAKVETFSMDSLLPDDLLERILSFLPIASIFRAGTVCKRWNEIVSSRRFLCNFSNNSVSQRPWYFMFTTTDDPSGYAYDPIIRKWYSFDLPCIETSNWFVASSCGLVCFMDNDCRNKIYVSNPITKQWRTLIEPPGHKSTDYTAMSTSVNRANQAVNRANRSYSVSIVKSKQVPGNFFQWDLSIHLYSSETMTWTTLVNDVLSGWRGGNESVICNNVLYFMIYSTGGSDHRHGLIASNLSSIGSPSSGILMRSFIPMPCSLTCGRLMNLRERLVIVGGIGKHDRPEVIKGIGIWVLKGKEWVEMAKMPQRFFQGFGEFDEVFASSGTDDLVYIQSYGSPALLTFDMNLKYWRWSQKCPVTKKFPLQLFTGFCFEPRLEIAP.

The F-box domain occupies 37–83 (FSMDSLLPDDLLERILSFLPIASIFRAGTVCKRWNEIVSSRRFLCNF). 6 Kelch repeats span residues 81-135 (CNFS…SSCG), 137-178 (VCFM…MSTS), 196-246 (SIVK…ICNN), 251-299 (MIYS…LMNL), 302-350 (RLVI…EFDE), and 352-401 (FASS…FTGF).

In terms of assembly, part of a SCF (ASK-cullin-F-box) protein ligase complex. Interacts with SKP1A/ASK1, SKP1B/ASK2, ASK3, ASK9, ASK11, ASK12, ASK13, ASK14, ASK16 and ASK18.

Its pathway is protein modification; protein ubiquitination. Component of SCF(ASK-cullin-F-box) E3 ubiquitin ligase complexes, which may mediate the ubiquitination and subsequent proteasomal degradation of target proteins. This is F-box/kelch-repeat protein At3g61590 from Arabidopsis thaliana (Mouse-ear cress).